The sequence spans 155 residues: Pathogenesis-related protein A (155 aa).

The protein belongs to the BetVI family.

The chain is Pathogenesis-related protein A (PCPR1-1) from Petroselinum crispum (Parsley).